A 429-amino-acid polypeptide reads, in one-letter code: MTVFSVQSTIFSRASVALLSSNGFKRFSFVSSFSSSAAYSPPKMRKRRYPIVSAVDIGGVAIARNDVVREDDPTNNVPDSIFSKLGMQLHRRDKHPIGILKNAIYDYFDSNYSNKFEKFEDLSPIVTTKQNFDDVLVPADHVSRSLNDTYYVDSQTVLRCHTSAHQAELLRKGHSRFLVTGDVYRRDSIDSTHYPVFHQMEGFCVFSPEDWNGSGKDSTLYAAEDLKKCLEGLARHLFGSVEMRWVDTYFPFTNPSFELEIYFKEDWLEVLGCGVTEQVILKQSGLENNVAWAFGLGLERLAMVLFDIPDIRFFWSSDERFTSQFGKGELGVKFKPYSKYPPCYKDISFWISDLFTENNFCEVVRGIAGDLVEEVKLIDQFTNKKKGLTSHCYRIVFRSMERSLTDEEVNDLQSKVRDEVQKKLNVELR.

The N-terminal 53 residues, 1–53 (MTVFSVQSTIFSRASVALLSSNGFKRFSFVSSFSSSAAYSPPKMRKRRYPIVS), are a transit peptide targeting the chloroplast and mitochondrion. Residue Ala54 is modified to N-acetylalanine. Residues 163 to 166 (SAHQ), Arg185, 192 to 194 (THY), 199 to 201 (QME), Glu269, and Phe294 each bind substrate. The FDX-ACB domain maps to 338–429 (SKYPPCYKDI…VQKKLNVELR (92 aa)).

This sequence belongs to the class-II aminoacyl-tRNA synthetase family. Monomer.

The protein resides in the plastid. Its subcellular location is the chloroplast stroma. It is found in the mitochondrion matrix. It carries out the reaction tRNA(Phe) + L-phenylalanine + ATP = L-phenylalanyl-tRNA(Phe) + AMP + diphosphate + H(+). Its function is as follows. Is responsible for the charging of tRNA(Phe) with phenylalanine in mitochondrial translation. This chain is Phenylalanine--tRNA ligase, chloroplastic/mitochondrial, found in Arabidopsis thaliana (Mouse-ear cress).